The chain runs to 441 residues: Ribosomal protein uS12 methylthiotransferase RimO (441 aa).

The region spanning 8–118 is the MTTase N-terminal domain; it reads PKIGFVSLGC…VLEHVHHYVP (111 aa). Residues Cys17, Cys53, Cys82, Cys150, Cys154, and Cys157 each contribute to the [4Fe-4S] cluster site. The Radical SAM core domain maps to 136–373; the sequence is LTPRHYAYLK…MQLQQQISAE (238 aa). A TRAM domain is found at 376 to 441; the sequence is QEKVGREILV…DEYDLWGSRV (66 aa).

This sequence belongs to the methylthiotransferase family. RimO subfamily. It depends on [4Fe-4S] cluster as a cofactor.

The protein localises to the cytoplasm. The catalysed reaction is L-aspartate(89)-[ribosomal protein uS12]-hydrogen + (sulfur carrier)-SH + AH2 + 2 S-adenosyl-L-methionine = 3-methylsulfanyl-L-aspartate(89)-[ribosomal protein uS12]-hydrogen + (sulfur carrier)-H + 5'-deoxyadenosine + L-methionine + A + S-adenosyl-L-homocysteine + 2 H(+). In terms of biological role, catalyzes the methylthiolation of an aspartic acid residue of ribosomal protein uS12. In Escherichia coli (strain UTI89 / UPEC), this protein is Ribosomal protein uS12 methylthiotransferase RimO.